Reading from the N-terminus, the 293-residue chain is 4-hydroxy-tetrahydrodipicolinate synthase (293 aa).

T45 serves as a coordination point for pyruvate. The Proton donor/acceptor role is filled by Y133. The active-site Schiff-base intermediate with substrate is the K162. I204 contacts pyruvate.

Belongs to the DapA family. Homotetramer; dimer of dimers.

It localises to the cytoplasm. The catalysed reaction is L-aspartate 4-semialdehyde + pyruvate = (2S,4S)-4-hydroxy-2,3,4,5-tetrahydrodipicolinate + H2O + H(+). It participates in amino-acid biosynthesis; L-lysine biosynthesis via DAP pathway; (S)-tetrahydrodipicolinate from L-aspartate: step 3/4. Catalyzes the condensation of (S)-aspartate-beta-semialdehyde [(S)-ASA] and pyruvate to 4-hydroxy-tetrahydrodipicolinate (HTPA). This Brucella suis biovar 1 (strain 1330) protein is 4-hydroxy-tetrahydrodipicolinate synthase.